Here is a 240-residue protein sequence, read N- to C-terminus: Vacuolar-sorting protein SNF7 (240 aa).

Threonine 72 is subject to Phosphothreonine. A phosphoserine mark is found at serine 119 and serine 193. The tract at residues 193-240 (SENKVSLPSVPSNKIKQSENSVKDGEEEEDEEDEDEKALRELQAEMGL) is disordered. A compositionally biased stretch (polar residues) spans 195–212 (NKVSLPSVPSNKIKQSEN). A compositionally biased stretch (acidic residues) spans 217–228 (GEEEEDEEDEDE). Lysine 229 participates in a covalent cross-link: Glycyl lysine isopeptide (Lys-Gly) (interchain with G-Cter in ubiquitin). Basic and acidic residues predominate over residues 229–240 (KALRELQAEMGL).

It belongs to the SNF7 family. In terms of assembly, core component of the ESCRT-III complex (endosomal sorting required for transport complex III). ESCRT-III appears to be sequentially assembled as a flat lattice on the endosome membrane and forms a transient 450 kDa complex that contains DID4, oligomerized SNF7, VPS20 and VPS24. SNF7 polymerizes into spirals at the surface of lipid bilayers. SNF7 polymerization is nucleated by association of SNF7 with VPS20; the process is terminated through association of VPS24, possibly by capping the SNF7 filament. Interacts with VTA1; the interaction requires DID2. Interacts with BRO1. Interacts with DOA4. Interacts with HEH1 and HEH2. Interacts with RIM20 and YGR122W.

The protein localises to the cytoplasm. It is found in the endosome membrane. It localises to the nucleus envelope. Acts a component of the ESCRT-III complex required for the sorting and concentration of proteins resulting in the entry of these proteins into the invaginating vesicles of the multivesicular body (MVB). The sequential action of ESCRT-0, -I, and -II together with the ordered assembly of ESCRT-III links membrane invagination to cargo sorting. Membrane scission in the neck of the growing vesicle releases mature, cargo-laden ILVs into the lumen. ESCRT-III is critical for late steps in MVB sorting, such as membrane invagination and final cargo sorting and recruitment of late-acting components of the sorting machinery. SNF7 is the most abundant ESCRT-III subunit which forms membrane-sculpting filaments with 30 Angstrom periodicity and a exposed cationic membrane-binding surface. Its activation requires a prominent conformational rearrangement to expose protein-membrane and protein-protein interfaces. SNF7 filaments then form spirals that could function as spiral springs. The elastic expansion of compressed SNF7 spirals generates an area difference between the two sides of the membrane and thus curvature which could be the origin of membrane deformation leading eventually to fission. SNF7 recruits BRO1, which in turn recruits DOA4, which deubiquitinates cargos before their enclosure within MVB vesicles. ESCRT-III is also recruited to the nuclear envelope (NE) by integral INM proteins to surveil and clear defective nuclear pore complex (NPC) assembly intermediates to ensure the fidelity of NPC assembly. The chain is Vacuolar-sorting protein SNF7 from Saccharomyces cerevisiae (strain ATCC 204508 / S288c) (Baker's yeast).